The chain runs to 309 residues: Low-density lipoprotein receptor-related protein 1 (309 aa).

Belongs to the LDLR family.

The protein resides in the endoplasmic reticulum. It localises to the golgi apparatus. It is found in the endosome. In terms of biological role, involved in endocytosis, fatty acid beta-oxidation and infectious growth. Plays a critical role in the accumulation of MSN2 from the cytosol to the nucleus by activating the cyclic AMP signaling pathway. MSN2 can then target the dienoyl-coenzyme A isomerase DCI1 and other genes involved in fatty acid beta-oxidation, which is important for lipid droplets degradation and infectious growth. This Pyricularia oryzae (strain 70-15 / ATCC MYA-4617 / FGSC 8958) (Rice blast fungus) protein is Low-density lipoprotein receptor-related protein 1.